We begin with the raw amino-acid sequence, 215 residues long: Protein slowmo (215 aa).

A PRELI/MSF1 domain is found at 1–170 (MKIWTSEHIF…VIGLINTEVK (170 aa)).

The protein belongs to the slowmo family. As to expression, expressed in specific tissues such as the developing central nervous system (CNS) and both the male and female germline. In the CNS, it is restricted in a subset of cells during embryogenesis and early larval development. In embryos, it is also expressed in salivary glands. In the testis, expressed in somatic cyst cells throughout the distal region where the mitotic cysts develop, extending through to meiotic cysts.

The protein localises to the mitochondrion. Its function is as follows. Required to regulate peristaltic movement and also for germline proliferation in males and females. The polypeptide is Protein slowmo (slmo) (Drosophila melanogaster (Fruit fly)).